Here is a 463-residue protein sequence, read N- to C-terminus: NADH dehydrogenase [ubiquinone] iron-sulfur protein 2, mitochondrial (463 aa).

The N-terminal 33 residues, 1–33 (MAALRALGGLRGVAAQVLRPGAGVRLPIQPSRG), are a transit peptide targeting the mitochondrion. At K62 the chain carries N6-acetyllysine. At R118 the chain carries Symmetric dimethylarginine. Residues C326, C332, and C347 each contribute to the [4Fe-4S] cluster site.

It belongs to the complex I 49 kDa subunit family. Core subunit of respiratory chain NADH dehydrogenase (Complex I) which is composed of 45 different subunits. Component of the iron-sulfur (IP) fragment of the enzyme. Interacts with NDUFAF3. Interacts with NDUFAF7. Interacts with CERS2. It depends on [4Fe-4S] cluster as a cofactor. Post-translationally, dimethylation at Arg-118 by NDUFAF7 takes place after NDUFS2 assembles into the complex I, leading to stabilize the early intermediate complex.

The protein localises to the mitochondrion inner membrane. The catalysed reaction is a ubiquinone + NADH + 5 H(+)(in) = a ubiquinol + NAD(+) + 4 H(+)(out). Core subunit of the mitochondrial membrane respiratory chain NADH dehydrogenase (Complex I) which catalyzes electron transfer from NADH through the respiratory chain, using ubiquinone as an electron acceptor. Essential for the catalytic activity and assembly of complex I. Redox-sensitive, critical component of the oxygen-sensing pathway in the pulmonary vasculature which plays a key role in acute pulmonary oxygen-sensing and hypoxic pulmonary vasoconstriction. Plays an important role in carotid body sensing of hypoxia. Essential for glia-like neural stem and progenitor cell proliferation, differentiation and subsequent oligodendrocyte or neuronal maturation. The chain is NADH dehydrogenase [ubiquinone] iron-sulfur protein 2, mitochondrial (NDUFS2) from Pongo pygmaeus (Bornean orangutan).